We begin with the raw amino-acid sequence, 1894 residues long: Plexin-A4 (1894 aa).

Residues methionine 1 to serine 23 form the signal peptide. In terms of domain architecture, Sema spans threonine 24–valine 507. At threonine 24–proline 1237 the chain is on the extracellular side. Cystine bridges form between cysteine 95/cysteine 104, cysteine 130/cysteine 138, cysteine 284/cysteine 405, cysteine 300/cysteine 356, cysteine 374/cysteine 393, cysteine 510/cysteine 527, cysteine 516/cysteine 558, cysteine 519/cysteine 536, cysteine 530/cysteine 542, and cysteine 593/cysteine 612. In terms of domain architecture, PSI 1 spans serine 509–valine 559. A glycan (N-linked (GlcNAc...) asparagine) is linked at asparagine 655. PSI domains lie at asparagine 655 to proline 702 and lysine 803 to threonine 856. IPT/TIG domains lie at proline 858–methionine 952, leucine 954–valine 1037, proline 1040–tyrosine 1139, and proline 1142–proline 1230. N-linked (GlcNAc...) asparagine glycosylation is found at asparagine 1007, asparagine 1132, and asparagine 1180. The helical transmembrane segment at alanine 1238–isoleucine 1258 threads the bilayer. The Cytoplasmic portion of the chain corresponds to alanine 1259–serine 1894. Residue lysine 1350 is modified to N6-acetyllysine.

The protein belongs to the plexin family. As to quaternary structure, interacts with NRP1 and NRP2.

The protein resides in the cell membrane. In terms of biological role, coreceptor for SEMA3A. Necessary for signaling by class 3 semaphorins and subsequent remodeling of the cytoskeleton. Plays a role in axon guidance in the developing nervous system. Class 3 semaphorins bind to a complex composed of a neuropilin and a plexin. The plexin modulates the affinity of the complex for specific semaphorins, and its cytoplasmic domain is required for the activation of down-stream signaling events in the cytoplasm. The protein is Plexin-A4 (PLXNA4) of Homo sapiens (Human).